The chain runs to 187 residues: Ribosome-recycling factor (187 aa).

It belongs to the RRF family.

The protein localises to the cytoplasm. Its function is as follows. Responsible for the release of ribosomes from messenger RNA at the termination of protein biosynthesis. May increase the efficiency of translation by recycling ribosomes from one round of translation to another. In Flavobacterium psychrophilum (strain ATCC 49511 / DSM 21280 / CIP 103535 / JIP02/86), this protein is Ribosome-recycling factor.